We begin with the raw amino-acid sequence, 493 residues long: Glutamyl-tRNA(Gln) amidotransferase subunit A (493 aa).

Catalysis depends on charge relay system residues Lys-78 and Ser-158. The active-site Acyl-ester intermediate is the Ser-182.

This sequence belongs to the amidase family. GatA subfamily. Heterotrimer of A, B and C subunits.

It catalyses the reaction L-glutamyl-tRNA(Gln) + L-glutamine + ATP + H2O = L-glutaminyl-tRNA(Gln) + L-glutamate + ADP + phosphate + H(+). Allows the formation of correctly charged Gln-tRNA(Gln) through the transamidation of misacylated Glu-tRNA(Gln) in organisms which lack glutaminyl-tRNA synthetase. The reaction takes place in the presence of glutamine and ATP through an activated gamma-phospho-Glu-tRNA(Gln). This chain is Glutamyl-tRNA(Gln) amidotransferase subunit A, found in Rickettsia felis (strain ATCC VR-1525 / URRWXCal2) (Rickettsia azadi).